We begin with the raw amino-acid sequence, 208 residues long: MNRQGKTPRFKRQRRLLTELPGMGKAGALERRPYPPGQHGLQRRKYSEFALQLEEKQKLRFHYGLREEQFRRLINKAKKSKATNWVEALVNLLEKRLDNVVFRLGFASSIPAARQLVSHGKVLVNGKKVNIGSQIIKVGDKITLKDEAYQNQVYMAAKQAPRLPLPSFMAKEDVAGKEQGRLTDEPNLEAVPFAFEPGLVIGYYSMRG.

Residues 95–160 (KRLDNVVFRL…NQVYMAAKQA (66 aa)) enclose the S4 RNA-binding domain.

This sequence belongs to the universal ribosomal protein uS4 family. Part of the 30S ribosomal subunit. Contacts protein S5. The interaction surface between S4 and S5 is involved in control of translational fidelity.

In terms of biological role, one of the primary rRNA binding proteins, it binds directly to 16S rRNA where it nucleates assembly of the body of the 30S subunit. Functionally, with S5 and S12 plays an important role in translational accuracy. In Bdellovibrio bacteriovorus (strain ATCC 15356 / DSM 50701 / NCIMB 9529 / HD100), this protein is Small ribosomal subunit protein uS4B.